The following is a 190-amino-acid chain: Molybdenum cofactor guanylyltransferase (190 aa).

GTP-binding positions include 8-10 (LAG), Lys-20, Asp-64, and Asp-98. Asp-98 is a Mg(2+) binding site.

It belongs to the MobA family. In terms of assembly, monomer. It depends on Mg(2+) as a cofactor.

The protein resides in the cytoplasm. The enzyme catalyses Mo-molybdopterin + GTP + H(+) = Mo-molybdopterin guanine dinucleotide + diphosphate. Transfers a GMP moiety from GTP to Mo-molybdopterin (Mo-MPT) cofactor (Moco or molybdenum cofactor) to form Mo-molybdopterin guanine dinucleotide (Mo-MGD) cofactor. This chain is Molybdenum cofactor guanylyltransferase, found in Rhodobacter capsulatus (Rhodopseudomonas capsulata).